The sequence spans 525 residues: GMP synthase [glutamine-hydrolyzing] (525 aa).

The Glutamine amidotransferase type-1 domain maps to 9–207 (RILILDFGSQ…VLDICQCEAL (199 aa)). The active-site Nucleophile is cysteine 86. Active-site residues include histidine 181 and glutamate 183. The GMPS ATP-PPase domain occupies 208–400 (WTPATIIEDA…LGLPYDMLFR (193 aa)). 235-241 (SGGVDSS) contacts ATP.

As to quaternary structure, homodimer.

It catalyses the reaction XMP + L-glutamine + ATP + H2O = GMP + L-glutamate + AMP + diphosphate + 2 H(+). Its pathway is purine metabolism; GMP biosynthesis; GMP from XMP (L-Gln route): step 1/1. Its function is as follows. Catalyzes the synthesis of GMP from XMP. The polypeptide is GMP synthase [glutamine-hydrolyzing] (Serratia proteamaculans (strain 568)).